Consider the following 349-residue polypeptide: Heat-inducible transcription repressor HrcA (349 aa).

This sequence belongs to the HrcA family.

Functionally, negative regulator of class I heat shock genes (grpE-dnaK-dnaJ and groELS operons). Prevents heat-shock induction of these operons. This is Heat-inducible transcription repressor HrcA from Mycoplasmoides gallisepticum (strain R(low / passage 15 / clone 2)) (Mycoplasma gallisepticum).